Here is a 482-residue protein sequence, read N- to C-terminus: Keratin, type I cytoskeletal 39 (482 aa).

Positions 1-24 are disordered; the sequence is MDTKGSTVTISSSTPPQNCSGNTN. A head region spans residues 1-91; the sequence is MDTKGSTVTI…RCTEGINTHE (91 aa). The region spanning 91–402 is the IF rod domain; the sequence is EKETMQILNE…SLLESLDGRL (312 aa). Residues 92-126 are coil 1A; it reads KETMQILNERLANYLEKVRMLEGENADLEDKIQEA. The linker 1 stretch occupies residues 127-137; sequence CSKALPILCPD. The coil 1B stretch occupies residues 138–238; the sequence is YLSYYTTIEE…HEEEVNSLQC (101 aa). The tract at residues 239–254 is linker 12; that stretch reads QLGDRINIEVTAAPSV. The coil 2 stretch occupies residues 255–398; it reads DLNQILQEMR…ATYRSLLESL (144 aa). Residues 399-482 form a tail region; it reads DGRLPCNPCA…PCYITRATKV (84 aa).

It belongs to the intermediate filament family. In terms of assembly, heterotetramer of two type I and two type II keratins.

Functionally, may play a role in late hair differentiation. This is Keratin, type I cytoskeletal 39 (Krt39) from Mus musculus (Mouse).